Consider the following 485-residue polypeptide: Pumilio domain-containing protein 6 (485 aa).

Disordered regions lie at residues 29–48 (NKTH…PYRH) and 55–76 (SDLD…TPPP). Positions 55–68 (SDLDNYIFNSGSGS) are enriched in polar residues. Pumilio repeat units follow at residues 86-124 (EVLL…AVFE), 125-163 (KLTE…ELLR), 164-200 (QMID…QLIQ), 201-236 (ELST…TFFV), 237-279 (HFLS…FRIQ), 287-324 (CIVR…TIID), 326-361 (CLLR…EMME), and 372-411 (ELNR…RQLP). An RNA-binding region spans residues 439 to 454 (FSSGKKIIDSVMRHGV).

Its function is as follows. RNA-binding protein that binds to the consensus sequence 5'-CUCUGUAUCUUGU-3' in mRNA 3'-UTRs and modulates mRNA expression and stability. Functions redundantly with puf-5 and puf-7 in oocyte formation and organization, early embryonic cell divisions, and repression of expression of glp-1 and other maternal mRNAs in late oogenesis. This chain is Pumilio domain-containing protein 6, found in Caenorhabditis elegans.